Reading from the N-terminus, the 811-residue chain is Ribosome biogenesis protein ERB1 (811 aa).

The span at Met1–Pro11 shows a compositional bias: polar residues. The disordered stretch occupies residues Met1 to Pro138. A compositionally biased stretch (acidic residues) spans Glu27 to Ser96. The segment covering Ala104 to Ala121 has biased composition (polar residues). Residues Glu128–Pro138 show a composition bias toward basic and acidic residues. Residues Arg270–Gly386 form a required for interaction with NOP7 region. Positions Gly386–Pro422 are required for interaction with YTM1. WD repeat units follow at residues Gly438 to Lys477 and Asn485 to Glu525. The segment at Thr547–Ala566 is disordered. 5 WD repeats span residues Gln595–Pro637, Lys640–Lys678, Pro681–Lys720, Tyr724–Thr764, and Ile780–Thr811.

Belongs to the WD repeat BOP1/ERB1 family. Component of the NOP7 complex, composed of ERB1, NOP7 and YTM1. The complex is held together by ERB1, which interacts with NOP7 via its N-terminal domain and with YTM1 via a high-affinity interaction between the seven-bladed beta-propeller domains of the 2 proteins. The NOP7 complex associates with the 66S pre-ribosome.

Its subcellular location is the nucleus. The protein localises to the nucleolus. It localises to the nucleoplasm. Component of the NOP7 complex, which is required for maturation of the 25S and 5.8S ribosomal RNAs and formation of the 60S ribosome. The sequence is that of Ribosome biogenesis protein ERB1 from Debaryomyces hansenii (strain ATCC 36239 / CBS 767 / BCRC 21394 / JCM 1990 / NBRC 0083 / IGC 2968) (Yeast).